A 384-amino-acid polypeptide reads, in one-letter code: Adaptive-response sensory kinase SasA (384 aa).

Residues 162–384 enclose the Histidine kinase domain; it reads MLAHDLRSPL…SFHFTLPVYR (223 aa). At histidine 165 the chain carries Phosphohistidine; by autocatalysis.

In terms of assembly, homooligomerizes. Interacts with KaiC. Participates in the KaiABC clock complex, whose core is composed of a KaiC homohexamer, 6 KaiB and up to 6 KaiA dimers. SasA and KaiB(fs) compete to bind to KaiC.

It catalyses the reaction ATP + protein L-histidine = ADP + protein N-phospho-L-histidine.. In terms of biological role, member of the two-component regulatory system SasA/RpaA involved in genome-wide circadian gene expression. One of several clock output pathways. Participates in the Kai clock protein complex, the main circadian regulator in cyanobacteria, via its interaction with KaiC. KaiC enhances the autophosphorylation activity of SasA, which then transfers its phosphate group to RpaA to activate it. In addition to its output function, recruits fold-shifted KaiB (KaiB(fs)) to KaiC to cooperatively form the KaiB(6):KaiC(6) complex (independent of SasA kinase activity). Required for robustness of the circadian rhythm of gene expression and is involved in clock output, also required for adaptation to light/dark cycles. The chain is Adaptive-response sensory kinase SasA from Microcystis aeruginosa (strain NIES-843 / IAM M-2473).